We begin with the raw amino-acid sequence, 150 residues long: Large ribosomal subunit protein bL9 (150 aa).

It belongs to the bacterial ribosomal protein bL9 family.

Binds to the 23S rRNA. This chain is Large ribosomal subunit protein bL9, found in Polaromonas naphthalenivorans (strain CJ2).